The chain runs to 226 residues: Late expression factor 7 (226 aa).

The region spanning 9–58 (RAKRIRLPLEIIDTILQYLDPILHAKVVGLTTRVKCRLLRDNNVEDYLKL) is the F-box domain.

Interacts with host S-phase kinase-associated protein 1/SKP1.

It localises to the host nucleus. The protein operates within protein degradation; proteasomal ubiquitin-dependent pathway. In terms of biological role, F-box protein that manipulates the host DNA damage response (DRR) in order to promote viral multiplication. Acts as a substrate recognition component of SKP1/Cullin/F-box (SCF) complexes for targeted protein polyubiquitination. This chain is Late expression factor 7 (LEF-7), found in Lepidoptera (butterflies and moths).